Consider the following 162-residue polypeptide: UPF0114 protein PSEEN0819 (162 aa).

3 consecutive transmembrane segments (helical) span residues Leu15–Phe35, Leu53–Val73, and Leu136–Leu156.

It belongs to the UPF0114 family.

The protein resides in the cell membrane. The protein is UPF0114 protein PSEEN0819 of Pseudomonas entomophila (strain L48).